The following is a 465-amino-acid chain: Lysosomal dipeptide transporter MFSD1 (465 aa).

Residues 1–23 (MEEEDEEARALLAGGPDEADRGA) are disordered. Positions 11-12 (LL) match the Dileucine internalization motif motif. A run of 12 helical transmembrane segments spans residues 39 to 59 (LVHR…SYFC), 83 to 103 (LLYA…GFLI), 113 to 133 (TIIF…GGIF), 135 to 155 (AFWL…SLAV), 170 to 191 (LNLV…NMNL), 213 to 233 (ITLM…LALA), 266 to 286 (LWLI…FIGL), 304 to 324 (AINS…GLLV), 331 to 351 (IIWV…LAFT), 361 to 381 (LLGL…AFVV), 392 to 412 (FMQS…GMIL), and 418 to 438 (LFLE…VVLL).

Belongs to the major facilitator superfamily. In terms of assembly, homodimer. Interacts with lysosomal protein GLMP (via lumenal domain); the interaction starts while both proteins are still in the endoplasmic reticulum and is required for stabilization of MFSD1 in lysosomes but has no direct effect on its targeting to lysosomes or transporter activity.

It localises to the lysosome membrane. It catalyses the reaction L-alpha-aminoacyl-L-arginine(out) = L-alpha-aminoacyl-L-arginine(in). It carries out the reaction L-arginyl-L-alpha-amino acid(out) = L-arginyl-L-alpha-amino acid(in). The enzyme catalyses L-arginyl-glycine(out) = L-arginyl-glycine(in). The catalysed reaction is L-alpha-aminoacyl-L-lysine(out) = L-alpha-aminoacyl-L-lysine(in). It catalyses the reaction L-aspartyl-L-lysine(out) = L-aspartyl-L-lysine(in). It carries out the reaction L-alanyl-L-lysine(out) = L-alanyl-L-lysine(in). The enzyme catalyses L-lysyl-L-alpha-amino acid(out) = L-lysyl-L-alpha-amino acid(in). The catalysed reaction is L-lysyl-L-alanine(out) = L-lysyl-L-alanine(in). It catalyses the reaction L-lysyl-L-lysine(out) = L-lysyl-L-lysine(in). It carries out the reaction L-lysyl-glycine(out) = L-lysyl-glycine(in). The enzyme catalyses L-alpha-aminoacyl-L-histidine(out) = L-alpha-aminoacyl-L-histidine(in). The catalysed reaction is L-histidyl-L-alpha-amino acid(out) = L-histidyl-L-alpha-amino acid(in). It catalyses the reaction L-histidyl-glycine(out) = L-histidyl-glycine(in). In terms of biological role, lysosomal dipeptide uniporter that selectively exports lysine, arginine or histidine-containing dipeptides with a net positive charge from the lysosome lumen into the cytosol. Could play a role in a specific type of protein O-glycosylation indirectly regulating macrophages migration and tissue invasion. Also essential for liver homeostasis. This Pongo abelii (Sumatran orangutan) protein is Lysosomal dipeptide transporter MFSD1.